Here is a 243-residue protein sequence, read N- to C-terminus: Probable 6-phosphogluconolactonase (243 aa).

This sequence belongs to the glucosamine/galactosamine-6-phosphate isomerase family. 6-phosphogluconolactonase subfamily.

The catalysed reaction is 6-phospho-D-glucono-1,5-lactone + H2O = 6-phospho-D-gluconate + H(+). The protein operates within carbohydrate degradation; pentose phosphate pathway; D-ribulose 5-phosphate from D-glucose 6-phosphate (oxidative stage): step 2/3. Hydrolysis of 6-phosphogluconolactone to 6-phosphogluconate. In Drosophila melanogaster (Fruit fly), this protein is Probable 6-phosphogluconolactonase.